The following is a 320-amino-acid chain: Protein HEXIM1 (320 aa).

Residues 1-124 form a disordered region; sequence MAEPLLSEFQ…RRRPSKKKRL (124 aa). A compositionally biased stretch (polar residues) spans 9 to 19; sequence FQHQPQTSNCT. The span at 24-47 shows a compositional bias: basic and acidic residues; it reads VHEERNPDRPPGAEERVPEEDSRW. Ser98 carries the phosphoserine modification. The segment covering 109 to 124 has biased composition (basic residues); sequence VGKKKHRRRPSKKKRL. The segment at 111-138 is basic region; mediates nuclear localization and interaction with 7SK snRNA and NR3C1; sequence KKKHRRRPSKKKRLWKPYYTLTWEEKKK. The segment at 163 to 166 is interaction with P-TEFb; that stretch reads PYNT. Positions 171–211 are autoinhibitory acidic region; in absence of 7SK snRNA interacts with the basic region preventing interaction with P-TEFb and modulating subcellular localization; sequence MDDHDQEEPDLKTGLYPKRAAAKSDDTSDEDFMEEAGEEDG. Residues 174-223 are disordered; sequence HDQEEPDLKTGLYPKRAAAKSDDTSDEDFMEEAGEEDGGSDGMGGDGSEF. Ser194 is modified (phosphoserine). A Phosphothreonine modification is found at Thr197. Acidic residues predominate over residues 197–212; the sequence is TSDEDFMEEAGEEDGG. Residues Ser198, Ser213, and Ser221 each carry the phosphoserine modification. Positions 244–310 form a coiled coil; sequence SKQELIKEYL…LTENELHRQQ (67 aa). A mediates interaction with CCNT1 region spans residues 247 to 275; the sequence is ELIKEYLELEKCLSRMEDENNRLRLESQR. The interval 271-316 is required for inhibition of ESR1-dependent transcription; that stretch reads LESQRLDGDDARVRELELELDRLRAENLQLLTENELHRQQERAPLS.

Belongs to the HEXIM family. In terms of assembly, homooligomer and heterooligomer with HEXIM2; probably dimeric. Core component of the 7SK RNP complex, at least composed of 7SK RNA, LARP7, MEPCE, HEXIM1 (or HEXIM2) and P-TEFb (composed of CDK9 and CCNT1/cyclin-T1). Interacts with the N-CoR complex through NCOR1. Interacts with ESR1 and NR3C1. May interact with NF-kappa-B through RELA. Interacts with CCNT2; mediates formation of a tripartite complex with KPNA2. Part of the HDP-RNP complex composed of at least HEXIM1, PRKDC, XRCC5, XRCC6, paraspeckle proteins (SFPQ, NONO, PSPC1, RBM14, and MATR3) and NEAT1 non-coding RNA.

It is found in the nucleus. It localises to the cytoplasm. Transcriptional regulator which functions as a general RNA polymerase II transcription inhibitor. Core component of the 7SK RNP complex: in cooperation with 7SK snRNA sequesters P-TEFb in a large inactive 7SK snRNP complex preventing RNA polymerase II phosphorylation and subsequent transcriptional elongation. May also regulate NF-kappa-B, ESR1, NR3C1 and CIITA-dependent transcriptional activity. Plays a role in the regulation of DNA virus-mediated innate immune response by assembling into the HDP-RNP complex, a complex that serves as a platform for IRF3 phosphorylation and subsequent innate immune response activation through the cGAS-STING pathway. The chain is Protein HEXIM1 (HEXIM1) from Bos taurus (Bovine).